We begin with the raw amino-acid sequence, 195 residues long: Transcription factor LBX2 (195 aa).

2 disordered regions span residues M1–T89 and P164–D195. The segment at residues R84 to V143 is a DNA-binding region (homeobox). A compositionally biased stretch (acidic residues) spans L186–D195.

In terms of tissue distribution, expressed in the developing urogenital system, eye and brain.

It is found in the nucleus. Functionally, transcription factor. This Mus musculus (Mouse) protein is Transcription factor LBX2 (Lbx2).